Consider the following 372-residue polypeptide: Chaperone protein DnaJ (372 aa).

The region spanning 5 to 70 is the J domain; that stretch reads DFYEVLGVTK…QKRAAYDRYG (66 aa). The CR-type zinc-finger motif lies at 129 to 207; the sequence is GKLASLTLPT…CGGAGRVTRE (79 aa). The Zn(2+) site is built by cysteine 142, cysteine 145, cysteine 159, cysteine 162, cysteine 181, cysteine 184, cysteine 195, and cysteine 198. 4 CXXCXGXG motif repeats span residues 142–149, 159–166, 181–188, and 195–202; these read CEACDGTG, CPTCGGQG, CPQCHGRG, and CQACGGAG.

The protein belongs to the DnaJ family. As to quaternary structure, homodimer. Zn(2+) is required as a cofactor.

The protein localises to the cytoplasm. Participates actively in the response to hyperosmotic and heat shock by preventing the aggregation of stress-denatured proteins and by disaggregating proteins, also in an autonomous, DnaK-independent fashion. Unfolded proteins bind initially to DnaJ; upon interaction with the DnaJ-bound protein, DnaK hydrolyzes its bound ATP, resulting in the formation of a stable complex. GrpE releases ADP from DnaK; ATP binding to DnaK triggers the release of the substrate protein, thus completing the reaction cycle. Several rounds of ATP-dependent interactions between DnaJ, DnaK and GrpE are required for fully efficient folding. Also involved, together with DnaK and GrpE, in the DNA replication of plasmids through activation of initiation proteins. In Beijerinckia indica subsp. indica (strain ATCC 9039 / DSM 1715 / NCIMB 8712), this protein is Chaperone protein DnaJ.